Here is a 451-residue protein sequence, read N- to C-terminus: Heat shock factor protein (451 aa).

Residues 12–117 mediate DNA binding; that stretch reads VPAFLAKLWT…LLENIKRKVN (106 aa). Disordered stretches follow at residues 210–273 and 285–307; these read LNDS…LEAS and LTPS…PISP. Residues 232–246 show a composition bias toward polar residues; the sequence is PSSTSYPVSGFTDSS.

Belongs to the HSF family. As to quaternary structure, homotrimer. Exhibits temperature-dependent phosphorylation.

The protein resides in the nucleus. Its function is as follows. DNA-binding protein that specifically binds heat shock promoter elements (HSE) and activates transcription. This Xenopus laevis (African clawed frog) protein is Heat shock factor protein (hsf1).